A 671-amino-acid chain; its full sequence is tRNA(Met) cytidine acetyltransferase TmcA (671 aa).

ATP contacts are provided by residues Q180, 202–211, and R319; that span reads GRGKSALAGQ. The N-acetyltransferase domain occupies 356-531; the sequence is QTLWQSDPET…SGCYTAMALL (176 aa). Residues 461–463, 468–474, E499, and R506 contribute to the acetyl-CoA site; these read IAV and QREGTGR.

It belongs to the RNA cytidine acetyltransferase family. TmcA subfamily.

It is found in the cytoplasm. The catalysed reaction is cytidine(34) in elongator tRNA(Met) + acetyl-CoA + ATP + H2O = N(4)-acetylcytidine(34) in elongator tRNA(Met) + ADP + phosphate + CoA + H(+). It catalyses the reaction 2-hydroxyisobutanoyl-CoA + L-lysyl-[protein] = N(6)-(2-hydroxyisobutanoyl)-L-lysyl-[protein] + CoA + H(+). Its activity is regulated as follows. ATP/GTP hydrolysis is stimulated by the addition of acetyl-CoA and tRNA(Met). Binding of acetyl-CoA to TmcA activates both ATPase and tRNA-binding activities. ATP promotes the 2-hydroxyisobutyryltransferase activity. Catalyzes the formation of N(4)-acetylcytidine (ac(4)C) at the wobble position of tRNA(Met), by using acetyl-CoA as an acetyl donor and ATP (or GTP). It recognizes the wobble base of tRNA(Met), thus distinguishing between tRNA(Met) and the structurally similar tRNA(Ile2). Could use an RNA helicase motor driven by ATP hydrolysis to deliver the wobble base of tRNA(Met) to the acetyltransferase domain of TmcA. Functionally, also functions as a lysine 2-hydroxyisobutyryltransferase to regulate transcription. Can specifically catalyze the 2-hydroxyisobutyrylation (Khib) of the DNA-binding protein H-NS. Hydroxyisobutyrylation of H-NS decreases its DNA-binding activity, promotes the expression of acid-resistance genes and enhances bacterial survival under extreme acid stress. The chain is tRNA(Met) cytidine acetyltransferase TmcA from Escherichia coli (strain K12).